A 471-amino-acid polypeptide reads, in one-letter code: Probable flavin-containing monoamine oxidase B (471 aa).

Cysteine 406 is subject to S-8alpha-FAD cysteine.

The protein belongs to the flavin monoamine oxidase family. The cofactor is FAD.

It carries out the reaction a secondary aliphatic amine + O2 + H2O = a primary amine + an aldehyde + H2O2. The protein is Probable flavin-containing monoamine oxidase B (maoB-1) of Dictyostelium discoideum (Social amoeba).